Reading from the N-terminus, the 242-residue chain is Myogenic factor 6 (242 aa).

The interval 31-63 (SPLYPGSDGTLSPCQDQMPPEAGSDSSGEEHVL) is disordered. The bHLH domain maps to 93-144 (DRRKAATLRERRRLKKINEAFEALKRRTVANPNQRLPKVEILRSAISYIERL).

As to quaternary structure, efficient DNA binding requires dimerization with another bHLH protein. Interacts with CSRP3. As to expression, skeletal muscle.

It localises to the nucleus. Its function is as follows. Involved in muscle differentiation (myogenic factor). Induces fibroblasts to differentiate into myoblasts. Probable sequence specific DNA-binding protein. This Homo sapiens (Human) protein is Myogenic factor 6 (MYF6).